A 123-amino-acid polypeptide reads, in one-letter code: MIQMQSTLDAADNSGARKVMCIKVLGGSHRRYAHIGDVIKVTVKEAIPRGKVKKGDVLKAVVVRTRKGVRRPDGSIIRFDRNACVLLNDTTEQPVGTRIFGPVTRELRNAKFMKIVSLAPEVL.

The protein belongs to the universal ribosomal protein uL14 family. In terms of assembly, part of the 50S ribosomal subunit. Forms a cluster with proteins L3 and L19. In the 70S ribosome, L14 and L19 interact and together make contacts with the 16S rRNA in bridges B5 and B8.

In terms of biological role, binds to 23S rRNA. Forms part of two intersubunit bridges in the 70S ribosome. The chain is Large ribosomal subunit protein uL14 from Aliivibrio salmonicida (strain LFI1238) (Vibrio salmonicida (strain LFI1238)).